The chain runs to 236 residues: Translocon-associated protein subunit alpha (236 aa).

The N-terminal stretch at 1–20 (MNKLITLLLAVLMIISCVYS) is a signal peptide. The Lumenal portion of the chain corresponds to 21–163 (DDVEITDDEV…TEKETSFDMD (143 aa)). N74, N94, N141, N148, and N152 each carry an N-linked (GlcNAc...) asparagine glycan. Residues 164-184 (SFFLILLGLGFVGGIGYIVYG) form a helical membrane-spanning segment. The Cytoplasmic portion of the chain corresponds to 185–236 (KMPKQKKVRTVSKVNKNAVRVETEDETAEWLSGTSAASSKVKSVQKVVKKNK).

This sequence belongs to the TRAP-alpha family. As to quaternary structure, heterotrimer of TRAP-alpha, TRAP-beta and TRAP-gamma. Post-translationally, phosphorylated in its cytoplasmic tail.

The protein resides in the endoplasmic reticulum membrane. TRAP proteins are part of a complex whose function is to bind calcium to the ER membrane and thereby regulate the retention of ER resident proteins. In Dictyostelium discoideum (Social amoeba), this protein is Translocon-associated protein subunit alpha (ssr1).